Consider the following 294-residue polypeptide: Ribosomal protein L11 methyltransferase (294 aa).

The S-adenosyl-L-methionine site is built by Thr145, Gly166, Asp188, and Asn227.

Belongs to the methyltransferase superfamily. PrmA family.

The protein localises to the cytoplasm. The enzyme catalyses L-lysyl-[protein] + 3 S-adenosyl-L-methionine = N(6),N(6),N(6)-trimethyl-L-lysyl-[protein] + 3 S-adenosyl-L-homocysteine + 3 H(+). Functionally, methylates ribosomal protein L11. This Hydrogenovibrio crunogenus (strain DSM 25203 / XCL-2) (Thiomicrospira crunogena) protein is Ribosomal protein L11 methyltransferase.